Reading from the N-terminus, the 150-residue chain is MGVQPPNFSWVLPGRLAGLALPRLPAHYQFLLDQGVRHLVSLTERGPPHSDSCPGLTLHRMRIPDFCPPSPEQIDQFVKIVDEANARGEAVGVHCALGFGRTGTMLACYLVKERALAAGDAIAEIRRLRPGSIETYEQEKAVFQFYQRTK.

A Tyrosine-protein phosphatase domain is found at 7–150; that stretch reads NFSWVLPGRL…AVFQFYQRTK (144 aa). Cysteine 95 serves as the catalytic Phosphocysteine intermediate.

It belongs to the protein-tyrosine phosphatase family. Non-receptor class dual specificity subfamily. Widely expressed.

The protein localises to the cytoplasm. The protein resides in the cytosol. It is found in the nucleus. The catalysed reaction is O-phospho-L-tyrosyl-[protein] + H2O = L-tyrosyl-[protein] + phosphate. The enzyme catalyses O-phospho-L-seryl-[protein] + H2O = L-seryl-[protein] + phosphate. It catalyses the reaction O-phospho-L-threonyl-[protein] + H2O = L-threonyl-[protein] + phosphate. Protein phosphatase that mediates dephosphorylation of proteins phosphorylated on Tyr and Ser/Thr residues. In vitro, it can dephosphorylate p44-ERK1 (MAPK3) but not p54 SAPK-beta (MAPK10) in vitro. Able to enhance activation of JNK and p38 (MAPK14). This is Dual specificity protein phosphatase 23 (Dusp23) from Mus musculus (Mouse).